Reading from the N-terminus, the 83-residue chain is Large ribosomal subunit protein bL27 (83 aa).

The disordered stretch occupies residues 1 to 25 (MAHKKGQGASRNGRDSESKRLGLKV).

This sequence belongs to the bacterial ribosomal protein bL27 family.

The sequence is that of Large ribosomal subunit protein bL27 from Chlamydia muridarum (strain MoPn / Nigg).